A 119-amino-acid polypeptide reads, in one-letter code: MSKGCQTQGPLSELEKAIDVIIDVFHQYSRREGDKDTLTRKELKLLIEKQLANYLKHVKNQVSIDQIFKDLDNNKDQQLSFGEVMLLIIRVTVATHEHLHFCEDHQQQHQHQHQHQHNH.

2 EF-hand domains span residues 23–58 (DVFHQYSRREGDKDTLTRKELKLLIEKQLANYLKHV) and 59–94 (KNQVSIDQIFKDLDNNKDQQLSFGEVMLLIIRVTVA). Residues T37, E42, D72, N74, D76, Q78, and E83 each contribute to the Ca(2+) site.

This sequence belongs to the S-100 family. In terms of tissue distribution, expressed in v-myb-transformed myelomonocytic cells.

This chain is Protein MRP-126, found in Gallus gallus (Chicken).